We begin with the raw amino-acid sequence, 221 residues long: Uracil-DNA glycosylase (221 aa).

Asp64 functions as the Proton acceptor in the catalytic mechanism.

Belongs to the uracil-DNA glycosylase (UDG) superfamily. UNG family.

The protein localises to the cytoplasm. The enzyme catalyses Hydrolyzes single-stranded DNA or mismatched double-stranded DNA and polynucleotides, releasing free uracil.. Its function is as follows. Excises uracil residues from the DNA which can arise as a result of misincorporation of dUMP residues by DNA polymerase or due to deamination of cytosine. In Mycoplasmopsis pulmonis (strain UAB CTIP) (Mycoplasma pulmonis), this protein is Uracil-DNA glycosylase.